Consider the following 295-residue polypeptide: 4-diphosphocytidyl-2-C-methyl-D-erythritol kinase (295 aa).

The active site involves lysine 22. 106 to 116 (PAGGGFGGGSS) contacts ATP. Aspartate 148 is an active-site residue.

This sequence belongs to the GHMP kinase family. IspE subfamily.

It catalyses the reaction 4-CDP-2-C-methyl-D-erythritol + ATP = 4-CDP-2-C-methyl-D-erythritol 2-phosphate + ADP + H(+). It functions in the pathway isoprenoid biosynthesis; isopentenyl diphosphate biosynthesis via DXP pathway; isopentenyl diphosphate from 1-deoxy-D-xylulose 5-phosphate: step 3/6. Functionally, catalyzes the phosphorylation of the position 2 hydroxy group of 4-diphosphocytidyl-2C-methyl-D-erythritol. This is 4-diphosphocytidyl-2-C-methyl-D-erythritol kinase from Xanthomonas euvesicatoria pv. vesicatoria (strain 85-10) (Xanthomonas campestris pv. vesicatoria).